Reading from the N-terminus, the 191-residue chain is Ribonuclease HII (191 aa).

The region spanning 16 to 191 (INLIGIDEAG…KLHRKSFKLL (176 aa)) is the RNase H type-2 domain. D22, E23, and D110 together coordinate a divalent metal cation.

It belongs to the RNase HII family. Requires Mn(2+) as cofactor. Mg(2+) is required as a cofactor.

Its subcellular location is the cytoplasm. The catalysed reaction is Endonucleolytic cleavage to 5'-phosphomonoester.. Functionally, endonuclease that specifically degrades the RNA of RNA-DNA hybrids. In Campylobacter jejuni subsp. jejuni serotype O:2 (strain ATCC 700819 / NCTC 11168), this protein is Ribonuclease HII (rnhB).